The chain runs to 234 residues: Small ribosomal subunit protein uS10m (234 aa).

The transit peptide at 1 to 23 (MLRIGYRGFSTRSRVFKLSPQEY) directs the protein to the mitochondrion.

Belongs to the universal ribosomal protein uS10 family. Component of the mitochondrial small ribosomal subunit (mt-SSU).

The protein localises to the mitochondrion. Its function is as follows. Component of the mitochondrial ribosome (mitoribosome), a dedicated translation machinery responsible for the synthesis of mitochondrial genome-encoded proteins, including at least some of the essential transmembrane subunits of the mitochondrial respiratory chain. The mitoribosomes are attached to the mitochondrial inner membrane and translation products are cotranslationally integrated into the membrane. This Candida albicans (strain SC5314 / ATCC MYA-2876) (Yeast) protein is Small ribosomal subunit protein uS10m (RSM10).